The primary structure comprises 118 residues: Large ribosomal subunit protein bL20 (118 aa).

It belongs to the bacterial ribosomal protein bL20 family.

In terms of biological role, binds directly to 23S ribosomal RNA and is necessary for the in vitro assembly process of the 50S ribosomal subunit. It is not involved in the protein synthesizing functions of that subunit. In Phenylobacterium zucineum (strain HLK1), this protein is Large ribosomal subunit protein bL20.